A 393-amino-acid chain; its full sequence is Homoserine O-succinyltransferase (393 aa).

The 311-residue stretch at N62–D372 folds into the AB hydrolase-1 domain. The Nucleophile role is filled by S168. R238 is a binding site for substrate. Catalysis depends on residues D333 and H366. D367 lines the substrate pocket.

This sequence belongs to the AB hydrolase superfamily. MetX family. As to quaternary structure, homodimer.

Its subcellular location is the cytoplasm. The enzyme catalyses L-homoserine + succinyl-CoA = O-succinyl-L-homoserine + CoA. Its pathway is amino-acid biosynthesis; L-methionine biosynthesis via de novo pathway; O-succinyl-L-homoserine from L-homoserine: step 1/1. Its function is as follows. Transfers a succinyl group from succinyl-CoA to L-homoserine, forming succinyl-L-homoserine. This chain is Homoserine O-succinyltransferase, found in Cupriavidus taiwanensis (strain DSM 17343 / BCRC 17206 / CCUG 44338 / CIP 107171 / LMG 19424 / R1) (Ralstonia taiwanensis (strain LMG 19424)).